The sequence spans 508 residues: Histone acetyltransferase type B catalytic subunit (508 aa).

2 interaction with histone H4 N-terminus regions span residues 44–46 (EKE) and 207–209 (YRY). Acetyl-CoA-binding positions include 249-251 (FII) and 256-262 (QQKGLGS). Glu284 (proton donor/acceptor) is an active-site residue. Disordered regions lie at residues 364–399 (SVRP…PTPE) and 461–508 (QADG…SGHA). The span at 387 to 399 (KGHEKALPKPTPE) shows a compositional bias: basic and acidic residues.

It belongs to the HAT1 family. As to quaternary structure, component of the HAT-B complex composed of at least hat-1 and hat-2. The HAT-B complex binds to histone H4 tail.

It localises to the cytoplasm. The protein localises to the nucleus. The enzyme catalyses L-lysyl-[protein] + acetyl-CoA = N(6)-acetyl-L-lysyl-[protein] + CoA + H(+). Catalytic component of the histone acetylase B (HAT-B) complex. Acetylates 'Lys-12' of histone H4 which is required for telomeric silencing. Has intrinsic substrate specificity that modifies lysine in recognition sequence GXGKXG. Involved in DNA double-strand break repair. This chain is Histone acetyltransferase type B catalytic subunit (hat-1), found in Neurospora crassa (strain ATCC 24698 / 74-OR23-1A / CBS 708.71 / DSM 1257 / FGSC 987).